Here is a 212-residue protein sequence, read N- to C-terminus: Ribonuclease P protein component 3 (212 aa).

It belongs to the eukaryotic/archaeal RNase P protein component 3 family. Consists of a catalytic RNA component and at least 4-5 protein subunits.

Its subcellular location is the cytoplasm. The catalysed reaction is Endonucleolytic cleavage of RNA, removing 5'-extranucleotides from tRNA precursor.. In terms of biological role, part of ribonuclease P, a protein complex that generates mature tRNA molecules by cleaving their 5'-ends. This is Ribonuclease P protein component 3 from Pyrococcus abyssi (strain GE5 / Orsay).